The sequence spans 487 residues: Berbamunine synthase (487 aa).

Cys429 contributes to the heme binding site.

This sequence belongs to the cytochrome P450 family. It depends on heme as a cofactor.

The protein resides in the endoplasmic reticulum membrane. It is found in the microsome membrane. The catalysed reaction is (R)-N-methylcoclaurine + (S)-N-methylcoclaurine + reduced [NADPH--hemoprotein reductase] + O2 = berbamunine + oxidized [NADPH--hemoprotein reductase] + 2 H2O + H(+). It participates in alkaloid biosynthesis; berbamunine biosynthesis; berbamunine from (R)-N-methylcoclaurine and (S)-N-methylcoclaurine: step 1/1. Its function is as follows. Forms the bisbenzylisoquinoline alkaloid berbamunine by phenol oxidation of N-methylcoclaurine without the incorporation of oxygen into the product. Oxidatively couples either two molecules of (R)-N-methylcoclaurine to form the (R,R) dimer guattegaumerine or one molecule each of (R)- and (S)-N-methylcoclaurine to form the (R,S) dimer berbamunine. This is Berbamunine synthase (CYP80A1) from Berberis stolonifera (Barberry).